Reading from the N-terminus, the 546-residue chain is UDP-glycosyltransferase FPY2 (546 aa).

Positions 1–20 (MSLPKAQILVVVTVGGSTNS) are cleaved as a signal peptide. Residues 517-537 (LNNIDVALLFFILLGIISWIT) traverse the membrane as a helical segment.

Belongs to the glycosyltransferase 28 family.

Its subcellular location is the membrane. Its pathway is secondary metabolite biosynthesis. UDP-glycosyltransferase; part of the gene cluster that mediates the biosynthesis of the gamma-pyrones fusapyrone (FPY) and deoxyfusapyrone (dFPY). FPY is an undecaketide and thus likely synthesized by the polyketide synthase FPY1 from acetyl-CoA functioning as starter unit and the addition of 10 malonyl-CoA extender units by successive Claisen-condensations. Next to this, FPY shares some rare features: C-glycosylated 4-deoxyglucose at C-3, a gem-dimethyl group at C-13, and an alpha-beta to beta-gamma double bond shift at C-20. During FPY biosynthesis mono-C-methyl groups are transferred to the tetra-, penta-, hexa- and heptaketide, while two C-methyl groups are transferred to the nonaketide, suggesting that the CMet domain is programmed to selectively catalyze two successive C-alpha-methylation reactions of the nonaketide, while other alpha-carbons are non- or mono-methylated only. While the origin of the 4'-deoxyglucose moiety remains opaque, its transfer to C-3 is most likely mediated by the C-glycosyltransferase FPY2. Next to this, the hydroxyl group present at C-33 and discriminating between FPY and dFPY, is likely to be installed by the cytochrome P450 monooxygenase FPY7. No putative function can be predicted for the remaining genes FPY3-FPY6. This Fusarium mangiferae (Mango malformation disease fungus) protein is UDP-glycosyltransferase FPY2.